A 478-amino-acid chain; its full sequence is Kynureninase (478 aa).

Residues leucine 150, threonine 151, 178–181, serine 234, aspartate 263, histidine 266, and tyrosine 288 each bind pyridoxal 5'-phosphate; that span reads FPSD. The residue at position 289 (lysine 289) is an N6-(pyridoxal phosphate)lysine. Tryptophan 318 and asparagine 346 together coordinate pyridoxal 5'-phosphate.

The protein belongs to the kynureninase family. As to quaternary structure, homodimer. It depends on pyridoxal 5'-phosphate as a cofactor.

Its subcellular location is the cytoplasm. The enzyme catalyses L-kynurenine + H2O = anthranilate + L-alanine + H(+). It catalyses the reaction 3-hydroxy-L-kynurenine + H2O = 3-hydroxyanthranilate + L-alanine + H(+). It participates in amino-acid degradation; L-kynurenine degradation; L-alanine and anthranilate from L-kynurenine: step 1/1. Its pathway is cofactor biosynthesis; NAD(+) biosynthesis; quinolinate from L-kynurenine: step 2/3. Its function is as follows. Catalyzes the cleavage of L-kynurenine (L-Kyn) and L-3-hydroxykynurenine (L-3OHKyn) into anthranilic acid (AA) and 3-hydroxyanthranilic acid (3-OHAA), respectively. This is Kynureninase from Caenorhabditis elegans.